The following is a 453-amino-acid chain: tRNA modification GTPase MnmE (453 aa).

(6S)-5-formyl-5,6,7,8-tetrahydrofolate contacts are provided by arginine 23, glutamate 80, and lysine 120. The TrmE-type G domain maps to 216 to 375 (GSKIVIIGKP…LIKYLKDLNC (160 aa)). Residue asparagine 226 participates in K(+) binding. GTP is bound by residues 226–231 (NSGKSS), 245–251 (TSIEGTT), and 270–273 (DTAG). Serine 230 lines the Mg(2+) pocket. The K(+) site is built by threonine 245, isoleucine 247, and threonine 250. Threonine 251 is a binding site for Mg(2+). Lysine 453 is a binding site for (6S)-5-formyl-5,6,7,8-tetrahydrofolate.

The protein belongs to the TRAFAC class TrmE-Era-EngA-EngB-Septin-like GTPase superfamily. TrmE GTPase family. As to quaternary structure, homodimer. Heterotetramer of two MnmE and two MnmG subunits. It depends on K(+) as a cofactor.

It localises to the cytoplasm. Exhibits a very high intrinsic GTPase hydrolysis rate. Involved in the addition of a carboxymethylaminomethyl (cmnm) group at the wobble position (U34) of certain tRNAs, forming tRNA-cmnm(5)s(2)U34. This is tRNA modification GTPase MnmE from Wigglesworthia glossinidia brevipalpis.